Reading from the N-terminus, the 627-residue chain is Translation factor GUF1, mitochondrial (627 aa).

The transit peptide at 1–16 directs the protein to the mitochondrion; it reads MSLAWSAGRAWSRQSY. The region spanning 40-221 is the tr-type G domain; the sequence is ERYRNFCIVA…AVIERIPHPV (182 aa). GTP is bound by residues 49–56, 114–118, and 168–171; these read AHIDHGKS, DTPGH, and NKID.

This sequence belongs to the TRAFAC class translation factor GTPase superfamily. Classic translation factor GTPase family. LepA subfamily.

Its subcellular location is the mitochondrion inner membrane. It carries out the reaction GTP + H2O = GDP + phosphate + H(+). Promotes mitochondrial protein synthesis. May act as a fidelity factor of the translation reaction, by catalyzing a one-codon backward translocation of tRNAs on improperly translocated ribosomes. Binds to mitochondrial ribosomes in a GTP-dependent manner. The chain is Translation factor GUF1, mitochondrial from Fusarium vanettenii (strain ATCC MYA-4622 / CBS 123669 / FGSC 9596 / NRRL 45880 / 77-13-4) (Fusarium solani subsp. pisi).